A 65-amino-acid polypeptide reads, in one-letter code: Conotoxin Am6.4 (65 aa).

Residues 1 to 33 form a disordered region; that stretch reads STGKRNAGKLTVTDDVEADRDTDPDDKDPSVHN. A propeptide spanning residues 1-36 is cleaved from the precursor; it reads STGKRNAGKLTVTDDVEADRDTDPDDKDPSVHNSWR. Residues 14–26 are compositionally biased toward acidic residues; the sequence is DDVEADRDTDPDD. 3 disulfides stabilise this stretch: Cys-40–Cys-50, Cys-45–Cys-59, and Cys-49–Cys-64.

In terms of processing, is not hydroxylated. Expressed by the venom duct.

The protein localises to the secreted. Functionally, probable toxin that inhibits ion channels. This Conus amadis (Amadis cone) protein is Conotoxin Am6.4.